We begin with the raw amino-acid sequence, 473 residues long: Bifunctional protein HldE (473 aa).

The ribokinase stretch occupies residues 1–318; sequence MKLSMPRFDQ…RAIQREEGSE (318 aa). 194-197 is a binding site for ATP; sequence NLSE. Asp263 is an active-site residue. Residues 343 to 473 form a cytidylyltransferase region; that stretch reads FTNGCFDILH…TAIVEKIRKN (131 aa).

In the N-terminal section; belongs to the carbohydrate kinase PfkB family. It in the C-terminal section; belongs to the cytidylyltransferase family. Homodimer.

The catalysed reaction is D-glycero-beta-D-manno-heptose 7-phosphate + ATP = D-glycero-beta-D-manno-heptose 1,7-bisphosphate + ADP + H(+). The enzyme catalyses D-glycero-beta-D-manno-heptose 1-phosphate + ATP + H(+) = ADP-D-glycero-beta-D-manno-heptose + diphosphate. It functions in the pathway nucleotide-sugar biosynthesis; ADP-L-glycero-beta-D-manno-heptose biosynthesis; ADP-L-glycero-beta-D-manno-heptose from D-glycero-beta-D-manno-heptose 7-phosphate: step 1/4. Its pathway is nucleotide-sugar biosynthesis; ADP-L-glycero-beta-D-manno-heptose biosynthesis; ADP-L-glycero-beta-D-manno-heptose from D-glycero-beta-D-manno-heptose 7-phosphate: step 3/4. Functionally, catalyzes the phosphorylation of D-glycero-D-manno-heptose 7-phosphate at the C-1 position to selectively form D-glycero-beta-D-manno-heptose-1,7-bisphosphate. In terms of biological role, catalyzes the ADP transfer from ATP to D-glycero-beta-D-manno-heptose 1-phosphate, yielding ADP-D-glycero-beta-D-manno-heptose. This is Bifunctional protein HldE from Pseudomonas putida (strain GB-1).